We begin with the raw amino-acid sequence, 464 residues long: Glycine--tRNA ligase (464 aa).

Residues Arg-104 and Glu-175 each coordinate substrate. ATP-binding positions include 207–209 (RNE), 217–222 (FRTREF), 292–293 (EL), and 336–339 (GVNR). 222–226 (FEQME) is a binding site for substrate. 332-336 (EPALG) lines the substrate pocket.

It belongs to the class-II aminoacyl-tRNA synthetase family. As to quaternary structure, homodimer.

The protein localises to the cytoplasm. The enzyme catalyses tRNA(Gly) + glycine + ATP = glycyl-tRNA(Gly) + AMP + diphosphate. Its function is as follows. Catalyzes the attachment of glycine to tRNA(Gly). The protein is Glycine--tRNA ligase of Leptospira interrogans serogroup Icterohaemorrhagiae serovar copenhageni (strain Fiocruz L1-130).